Here is a 338-residue protein sequence, read N- to C-terminus: Lipoate-protein ligase A (338 aa).

The region spanning 29-216 is the BPL/LPL catalytic domain; sequence PATQRVLFLW…AFFEHYSERV (188 aa). Residues Arg-71, 76–79, and Lys-134 each bind ATP; that span reads GAVF. Lys-134 contributes to the (R)-lipoate binding site.

Belongs to the LplA family. In terms of assembly, monomer.

It localises to the cytoplasm. It catalyses the reaction L-lysyl-[lipoyl-carrier protein] + (R)-lipoate + ATP = N(6)-[(R)-lipoyl]-L-lysyl-[lipoyl-carrier protein] + AMP + diphosphate + H(+). The protein operates within protein modification; protein lipoylation via exogenous pathway; protein N(6)-(lipoyl)lysine from lipoate: step 1/2. It functions in the pathway protein modification; protein lipoylation via exogenous pathway; protein N(6)-(lipoyl)lysine from lipoate: step 2/2. Functionally, catalyzes both the ATP-dependent activation of exogenously supplied lipoate to lipoyl-AMP and the transfer of the activated lipoyl onto the lipoyl domains of lipoate-dependent enzymes. The chain is Lipoate-protein ligase A from Enterobacter sp. (strain 638).